The following is a 265-amino-acid chain: Small ribosomal subunit protein uS2 (265 aa).

A disordered region spans residues 231 to 265 (VEEEYEDYEGAEDDYEYDETEYTDSVIPDDEEEAE).

Belongs to the universal ribosomal protein uS2 family.

The polypeptide is Small ribosomal subunit protein uS2 (Trichormus variabilis (strain ATCC 29413 / PCC 7937) (Anabaena variabilis)).